Reading from the N-terminus, the 699-residue chain is MSKINKLEQIRNIGICAHIDAGKTTTTERILYYTGKSHKIGEVHEGGATMDWMEQEQERGITITSAATTCRWQDKVINIIDTPGHVDFTIEVERSLRVLDGAVAVFDGVAGVEPQSETVWRQADKYNVPRMCFVNKMDRMGADFYRCVEMIKDRLGARSLIIQLPIGIEENFKGIVNLIKMKAVIWKDESLGAEYFEEDIPADMQDKAAEYRARLLDMVVELDDTIMEQYLSGAEITEEQIKILIRKGTIEARFYPILCGSAFKNKGVQPLLDAIVDFLPSPIDIGIVKGIEVSTSEEKDFPISIVEPFSALAFKIMNDPFVGSLTFIRIYSGKITSGATVINTVKNKREKIGRMLLMHANNREDIKEASAGDIVALAGLKDTSTGDTLSDIDKQVVLERMEFPEPVIELAVEPKSTADQEKMGLALSRLAAEDPSFRVSTDHETGQTVIKGMGELHLEIIIDRMRREFKVEANIGAPQVAYRETITTACEIDYTHKKQSGGAGQFARVKIIFEPLKDVIDLKDEDKNKTFVFESKIVGGAVPKEYIPGVEKGLNNIRETGVIAGYPMIDFKATLVDGAFHDVDSSVLAFEIAAKGAFREGMQKGNPKLLEPIMKVEVITPDEYMGDIIGDLNSRRGQIQNMDPRGNAQVVTAHVPLAEMFGYVNTLRSLSQGRAQFSMIFSHYDQVPSQVADMIKAKK.

One can recognise a tr-type G domain in the interval 8-283 (EQIRNIGICA…AIVDFLPSPI (276 aa)). GTP is bound by residues 17-24 (AHIDAGKT), 81-85 (DTPGH), and 135-138 (NKMD).

Belongs to the TRAFAC class translation factor GTPase superfamily. Classic translation factor GTPase family. EF-G/EF-2 subfamily.

The protein localises to the cytoplasm. Its function is as follows. Catalyzes the GTP-dependent ribosomal translocation step during translation elongation. During this step, the ribosome changes from the pre-translocational (PRE) to the post-translocational (POST) state as the newly formed A-site-bound peptidyl-tRNA and P-site-bound deacylated tRNA move to the P and E sites, respectively. Catalyzes the coordinated movement of the two tRNA molecules, the mRNA and conformational changes in the ribosome. This Rickettsia prowazekii (strain Madrid E) protein is Elongation factor G (fusA).